The sequence spans 491 residues: Putative pentatricopeptide repeat-containing protein At1g02420 (491 aa).

PPR repeat units follow at residues 179-209, 210-244, 245-279, 280-314, 315-349, 350-384, 385-419, and 420-454; these read DTAC…LKHQ, FQPD…GLKP, DVVT…EETP, DVIT…GCYP, DVAA…GLSP, NATT…ECLP, NTQS…GFGS, and YSLV…GHRP.

Belongs to the PPR family. P subfamily.

This Arabidopsis thaliana (Mouse-ear cress) protein is Putative pentatricopeptide repeat-containing protein At1g02420.